We begin with the raw amino-acid sequence, 735 residues long: MGIQGLLPLLKSIMVPIHIKELEGCIVAVDTYSWLHKGALSCSRELCKGLPTKRHIQYCMHRVNLLRHHGVKPIMVFDGGPLPMKLEQENKRARSRKENLARALEHEANGNSSAAYECYSKAVDISPSIAHELIQVLRQENVDYVVAPYEADAQMAFLAITKQVDAIITEDSDLIPFGCLRIIFKMDKFGHGVEFQASKLPKNKDLSLSGFSSQMLLEMCILSGCDYLQSLPGMGLKRAHALITKFKSYDRVIKHLKYSTVSVPPLYEESFKRALLTFKHQRVYDPNAEDIIHLCDISDNLGEDSDFVGPSMPQDIAKGIALGQLDPFTQLPFQAESVTPKLAVDDISRPKSFKPETVKKKLDLPVQKNLLTKYFCFASVEAKRKFKAPRISPMSLTPTDESPSIPDDNTPDLDALSSQTTNESPVYSLGENPCVSEVAEKRDSPDDDAVERNHKDLHHKYCEREVDRPKSDSLKVIVRSKYFKQKQEDKSLKQSIPCLNDCSVIGQRKAVKTVINMSSASKREESHRAIATSPCLHHDRIYNDHEDAKEASFSAMNEVAERTINTHKINHQINEEEQNPSVEIPSAFSTPENVIPLSSIAIDSCHGVATGKRKLDSDENLHKENLKSKHMRMDETDTALNAETPLETDDVEKFGSNISHIGHYSEIAEKSVERFVSAISSFKYSGTGSRASGLRAPLKDIRNTCPSKGLSLKPDISKFGYASSNRHMVTKSRRM.

The segment at 1 to 99 is N-domain; that stretch reads MGIQGLLPLL…NKRARSRKEN (99 aa). Mg(2+)-binding residues include aspartate 30, aspartate 78, glutamate 150, aspartate 152, aspartate 171, aspartate 173, and aspartate 226. The tract at residues 138–230 is I-domain; that stretch reads RQENVDYVVA…ILSGCDYLQS (93 aa). A disordered region spans residues 391–456; it reads ISPMSLTPTD…DDAVERNHKD (66 aa). The span at 416 to 425 shows a compositional bias: polar residues; it reads LSSQTTNESP. The segment covering 438 to 456 has biased composition (basic and acidic residues); sequence VAEKRDSPDDDAVERNHKD.

The protein belongs to the XPG/RAD2 endonuclease family. EXO1 subfamily. It depends on Mg(2+) as a cofactor.

The protein localises to the nucleus. Its function is as follows. Putative 5'-&gt;3' double-stranded DNA exonuclease which may also contain a cryptic 3'-&gt;5' double-stranded DNA exonuclease activity. May be involved in DNA mismatch repair (MMR). This is Exonuclease 1 (EXO1) from Arabidopsis thaliana (Mouse-ear cress).